The primary structure comprises 218 residues: Ras-related protein RabO (218 aa).

Position 15–22 (15–22) interacts with GTP; that stretch reads GDYCVGKT. The short motif at 37-45 is the Effector region element; that stretch reads RNCNIGVDF. GTP contacts are provided by residues 63–67 and 122–125; these read DTGGQ and NKID. A Cysteine methyl ester modification is found at C215. C215 carries the S-geranylgeranyl cysteine lipid modification. Positions 216 to 218 are cleaved as a propeptide — removed in mature form; sequence FIL.

Belongs to the small GTPase superfamily. Rab family.

It localises to the cell membrane. The chain is Ras-related protein RabO (rabO) from Dictyostelium discoideum (Social amoeba).